Here is a 61-residue protein sequence, read N- to C-terminus: Small ribosomal subunit protein uS14 (61 aa).

Positions 24, 27, 40, and 43 each coordinate Zn(2+).

It belongs to the universal ribosomal protein uS14 family. Zinc-binding uS14 subfamily. Part of the 30S ribosomal subunit. Contacts proteins S3 and S10. The cofactor is Zn(2+).

Binds 16S rRNA, required for the assembly of 30S particles and may also be responsible for determining the conformation of the 16S rRNA at the A site. The chain is Small ribosomal subunit protein uS14 from Thermotoga maritima (strain ATCC 43589 / DSM 3109 / JCM 10099 / NBRC 100826 / MSB8).